The sequence spans 168 residues: Protein SprT (168 aa).

One can recognise a SprT-like domain in the interval 20–166 (EKLQQANKYL…RHCQAILQLI (147 aa)). Position 78 (histidine 78) interacts with Zn(2+). The active site involves glutamate 79. Histidine 82 is a binding site for Zn(2+).

Belongs to the SprT family. It depends on Zn(2+) as a cofactor.

It is found in the cytoplasm. In Proteus mirabilis (strain HI4320), this protein is Protein SprT.